An 82-amino-acid polypeptide reads, in one-letter code: MKLTCVMIVAVLFLTAWTLVMADDSNNGLANLFSKLRDEMEDPEGSKLEKKDCQEKWDYCPVPFLGSRYCCDGFICPSFFCA.

The signal sequence occupies residues 1–19 (MKLTCVMIVAVLFLTAWTL). Residues 20–51 (VMADDSNNGLANLFSKLRDEMEDPEGSKLEKK) constitute a propeptide that is removed on maturation. 3 cysteine pairs are disulfide-bonded: Cys53/Cys71, Cys60/Cys76, and Cys70/Cys81. Ala82 bears the Alanine amide; partial mark.

Belongs to the O1 superfamily. Expressed by the venom duct.

The protein resides in the secreted. In terms of biological role, omega-conotoxins act at presynaptic membranes, they bind and block voltage-gated calcium channels (Cav). This chain is Conotoxin Tx6.6, found in Conus textile (Cloth-of-gold cone).